The following is a 313-amino-acid chain: Acetylglutamate kinase (313 aa).

Substrate-binding positions include 84–85 (GG), Arg-106, and Asn-210.

The protein belongs to the acetylglutamate kinase family. ArgB subfamily.

It is found in the cytoplasm. The catalysed reaction is N-acetyl-L-glutamate + ATP = N-acetyl-L-glutamyl 5-phosphate + ADP. Its pathway is amino-acid biosynthesis; L-arginine biosynthesis; N(2)-acetyl-L-ornithine from L-glutamate: step 2/4. In terms of biological role, catalyzes the ATP-dependent phosphorylation of N-acetyl-L-glutamate. This is Acetylglutamate kinase from Gluconacetobacter diazotrophicus (strain ATCC 49037 / DSM 5601 / CCUG 37298 / CIP 103539 / LMG 7603 / PAl5).